Here is a 358-residue protein sequence, read N- to C-terminus: 4-diphosphocytidyl-2-C-methyl-D-erythritol kinase (358 aa).

Residue Lys-24 is part of the active site. 138–148 contacts ATP; the sequence is PVAGGMAGGSA. Residue Asp-186 is part of the active site.

Belongs to the GHMP kinase family. IspE subfamily.

It catalyses the reaction 4-CDP-2-C-methyl-D-erythritol + ATP = 4-CDP-2-C-methyl-D-erythritol 2-phosphate + ADP + H(+). The protein operates within isoprenoid biosynthesis; isopentenyl diphosphate biosynthesis via DXP pathway; isopentenyl diphosphate from 1-deoxy-D-xylulose 5-phosphate: step 3/6. Functionally, catalyzes the phosphorylation of the position 2 hydroxy group of 4-diphosphocytidyl-2C-methyl-D-erythritol. The chain is 4-diphosphocytidyl-2-C-methyl-D-erythritol kinase from Corynebacterium jeikeium (strain K411).